A 123-amino-acid chain; its full sequence is Small ribosomal subunit protein bS16 (123 aa).

The tract at residues 87 to 123 (VKNNPVKAKPGKRAQERAAEKAQKVADAAAAAADAAE) is disordered. The span at 99–110 (RAQERAAEKAQK) shows a compositional bias: basic and acidic residues. Positions 111–123 (VADAAAAAADAAE) are enriched in low complexity.

It belongs to the bacterial ribosomal protein bS16 family.

The sequence is that of Small ribosomal subunit protein bS16 from Rhizobium johnstonii (strain DSM 114642 / LMG 32736 / 3841) (Rhizobium leguminosarum bv. viciae).